A 313-amino-acid chain; its full sequence is Porphobilinogen deaminase (313 aa).

Cysteine 242 is modified (S-(dipyrrolylmethanemethyl)cysteine).

The protein belongs to the HMBS family. In terms of assembly, monomer. Dipyrromethane serves as cofactor.

It catalyses the reaction 4 porphobilinogen + H2O = hydroxymethylbilane + 4 NH4(+). It participates in porphyrin-containing compound metabolism; protoporphyrin-IX biosynthesis; coproporphyrinogen-III from 5-aminolevulinate: step 2/4. Functionally, tetrapolymerization of the monopyrrole PBG into the hydroxymethylbilane pre-uroporphyrinogen in several discrete steps. The chain is Porphobilinogen deaminase from Escherichia coli O7:K1 (strain IAI39 / ExPEC).